Here is a 304-residue protein sequence, read N- to C-terminus: GDP-6-deoxy-D-mannose reductase (304 aa).

Residues 13–14 and 39–40 each bind NADP(+); these read FV and DL. A substrate-binding site is contributed by 105 to 106; the sequence is SG. Y131 contacts NADP(+). Substrate is bound by residues N160, R200, and 260–263; that span reads RRAE.

This sequence belongs to the NAD(P)-dependent epimerase/dehydratase family. GDP-6-deoxy-D-mannose reductase subfamily.

The enzyme catalyses GDP-alpha-D-rhamnose + NAD(+) = GDP-4-dehydro-alpha-D-rhamnose + NADH + H(+). It catalyses the reaction GDP-alpha-D-rhamnose + NADP(+) = GDP-4-dehydro-alpha-D-rhamnose + NADPH + H(+). Reductase that catalyzes the conversion of GDP-6-deoxy-D-mannose to GDP-4-dehydro-6-deoxy-D-mannose (GDP-D-rhamnose). The protein is GDP-6-deoxy-D-mannose reductase (rmd) of Pseudomonas aeruginosa (strain ATCC 15692 / DSM 22644 / CIP 104116 / JCM 14847 / LMG 12228 / 1C / PRS 101 / PAO1).